Here is a 282-residue protein sequence, read N- to C-terminus: Cell division protein FtsQ (282 aa).

Residues 1 to 30 (MINIGPPKKRRLRRKGNRFKKTRRVIPWRR) lie on the Cytoplasmic side of the membrane. The chain crosses the membrane as a helical span at residues 31–51 (LMIGALWGTMALASLGMVVAV). Over 52–282 (ACFAGQMLFA…LDAGELRGKG (231 aa)) the chain is Periplasmic. In terms of domain architecture, POTRA spans 65-133 (FKVERIQVEN…DQLVIRVDER (69 aa)).

The protein belongs to the FtsQ/DivIB family. FtsQ subfamily.

It is found in the cell inner membrane. Its function is as follows. Essential cell division protein. In Syntrophotalea carbinolica (strain DSM 2380 / NBRC 103641 / GraBd1) (Pelobacter carbinolicus), this protein is Cell division protein FtsQ.